The chain runs to 583 residues: Protein NRT1/ PTR FAMILY 5.1 (583 aa).

The chain crosses the membrane as a helical span at residues 74–94 (WSGAVWITPIAGAYIADSYIG). T98 bears the Phosphothreonine mark. A run of 10 helical transmembrane segments spans residues 99-119 (FTAS…AVTV), 134-154 (ASSL…IGAG), 182-202 (FFNW…LGLV), 210-230 (WGLG…VFYI), 320-340 (VLGL…WAQV), 361-381 (IPAA…VPMY), 405-425 (LGVG…VEVK), 446-466 (IFWL…NAIG), 485-505 (TFFT…VTMI), and 529-549 (YYYG…VWAA).

It belongs to the major facilitator superfamily. Proton-dependent oligopeptide transporter (POT/PTR) (TC 2.A.17) family. Expressed in flowers. Detected in stems, leaves and siliques.

The protein localises to the membrane. The protein is Protein NRT1/ PTR FAMILY 5.1 (NPF5.1) of Arabidopsis thaliana (Mouse-ear cress).